A 704-amino-acid chain; its full sequence is METISIDDLPLDIKIIDILKRRGIRTLNPPQSEAIRKGLLDGKRLLVTSPTASGKTLIAELGMINYLLSKGGKAIYITPLRALTNEKYNTFKDWETLGIKTGMTSGDYDTDDAWLENYDIIVTTYEKLDSLWRHKAKWLNEVSYFVLDEFHYLNDPERGPTVESVAIRAKKRGIVLGLSATISNGKEIANWLNAELVATNWRPVPLKEGIIYPEKKGFVVVYKDNTSRKVYGDDAIIAYTLDIVSKGGQVLVFRSSRKLAENTARKIVQYMNFVKLEDKKLLEIARKIKEVEDAGSNEKEDLYNLVLRGVAYHHAGLSKGLRDIIESSFRDRILKVIVATPTLAAGVNLPARAVVIGDIYRYNRKVVGYMDLIPVMDYKQMSGRAGRPGFDENGEAVVVVRNKREAEKVYERYLMSDVEPIESKLGSESAFYSFLISIIASEGEKTTEELMEYVKETLLPKELAKKYFRSGLDWLLQHDIFAEISDKITLTRFGRRISDLYINPFTAVTIREALEKNEKGCEIAYLHLLAYTPDGPSIGVSRAEEDALIDELNCELFVDEPEDEYEFSNYISALKVAYIVYDWVNEIDEDTILGKYGIGSGDLRAIIDTMDWLTYSGYHVASVLELKDHKDILEELHARVKDGVKPELIELVKIPGIGRVRARLLYQHDIKKPEDIVLNPEKVKQLLGPNLGEKIVREAARTIA.

ATP is bound by residues Q31 and 49-56 (SPTASGKT). The 165-residue stretch at 36-200 (RKGLLDGKRL…WLNAELVATN (165 aa)) folds into the Helicase ATP-binding domain. Residues 148-151 (DEFH) carry the DEAH box motif. Residues 235 to 439 (AIIAYTLDIV…AFYSFLISII (205 aa)) enclose the Helicase C-terminal domain. Positions 366-645 (VVGYMDLIPV…LHARVKDGVK (280 aa)) are binds Hjc. The segment at 432–644 (YSFLISIIAS…ELHARVKDGV (213 aa)) is required for helicase activity. The segment at 646 to 704 (PELIELVKIPGIGRVRARLLYQHDIKKPEDIVLNPEKVKQLLGPNLGEKIVREAARTIA) is inhibits intrinsic ATPase, and helicase.

It belongs to the helicase family. Hel308 subfamily. In terms of assembly, monomer; forms a 1:2 complex with Hjc, which may form a complex with Holliday junction DNA. Mg(2+) serves as cofactor.

The catalysed reaction is Couples ATP hydrolysis with the unwinding of duplex DNA by translocating in the 3'-5' direction.. It catalyses the reaction ATP + H2O = ADP + phosphate + H(+). It carries out the reaction Couples ATP hydrolysis with the unwinding of duplex DNA at the replication fork by translocating in the 5'-3' direction. This creates two antiparallel DNA single strands (ssDNA). The leading ssDNA polymer is the template for DNA polymerase III holoenzyme which synthesizes a continuous strand.. With respect to regulation, helicase activity is inhibited by Hjc and by PCNA123 and PCNA323. In terms of biological role, an ATP, Mg(2+)-dependent DNA 3'-5' and 5'-3' helicase that may be involved in repair of stalled replication forks. Stimulated by both ss and dsDNA. Unwinds both leading and lagging strands in replication fork structures, unlike orthologs in P.furiosus and M.thermautotrophicus which only unwind the lagging strand and only have 3'-5' helicase activity. Preferentially binds dsDNA with overhangs or branched DNA. Able to anneal DNA substrates that could form a replication fork-like structure, has replication fork reversal activity (at least in vitro). This Sulfurisphaera tokodaii (strain DSM 16993 / JCM 10545 / NBRC 100140 / 7) (Sulfolobus tokodaii) protein is ATP-dependent DNA helicase Hel308.